Reading from the N-terminus, the 231-residue chain is Cytochrome c oxidase subunit 2 (231 aa).

At 1–14 (MAHPAQLGLQNATS) the chain is on the mitochondrial intermembrane side. The chain crosses the membrane as a helical span at residues 15–45 (PIMEELIAFHDHALMIIFLISSLVLYIISLM). The Mitochondrial matrix segment spans residues 46–59 (LTTKLTHTSTMNAQ). Residues 60-87 (EIEMVWTILPAIILIMIALPSLRILYMT) form a helical membrane-spanning segment. The Mitochondrial intermembrane segment spans residues 88 to 231 (DEFNKPYLTL…WASYLYIVSL (144 aa)). Cu cation is bound by residues histidine 161, cysteine 196, glutamate 198, cysteine 200, histidine 204, and methionine 207. Residue glutamate 198 coordinates Mg(2+).

Belongs to the cytochrome c oxidase subunit 2 family. In terms of assembly, component of the cytochrome c oxidase (complex IV, CIV), a multisubunit enzyme composed of 14 subunits. The complex is composed of a catalytic core of 3 subunits MT-CO1, MT-CO2 and MT-CO3, encoded in the mitochondrial DNA, and 11 supernumerary subunits COX4I, COX5A, COX5B, COX6A, COX6B, COX6C, COX7A, COX7B, COX7C, COX8 and NDUFA4, which are encoded in the nuclear genome. The complex exists as a monomer or a dimer and forms supercomplexes (SCs) in the inner mitochondrial membrane with NADH-ubiquinone oxidoreductase (complex I, CI) and ubiquinol-cytochrome c oxidoreductase (cytochrome b-c1 complex, complex III, CIII), resulting in different assemblies (supercomplex SCI(1)III(2)IV(1) and megacomplex MCI(2)III(2)IV(2)). Found in a complex with TMEM177, COA6, COX18, COX20, SCO1 and SCO2. Interacts with TMEM177 in a COX20-dependent manner. Interacts with COX20. Interacts with COX16. Cu cation serves as cofactor.

It localises to the mitochondrion inner membrane. It catalyses the reaction 4 Fe(II)-[cytochrome c] + O2 + 8 H(+)(in) = 4 Fe(III)-[cytochrome c] + 2 H2O + 4 H(+)(out). Component of the cytochrome c oxidase, the last enzyme in the mitochondrial electron transport chain which drives oxidative phosphorylation. The respiratory chain contains 3 multisubunit complexes succinate dehydrogenase (complex II, CII), ubiquinol-cytochrome c oxidoreductase (cytochrome b-c1 complex, complex III, CIII) and cytochrome c oxidase (complex IV, CIV), that cooperate to transfer electrons derived from NADH and succinate to molecular oxygen, creating an electrochemical gradient over the inner membrane that drives transmembrane transport and the ATP synthase. Cytochrome c oxidase is the component of the respiratory chain that catalyzes the reduction of oxygen to water. Electrons originating from reduced cytochrome c in the intermembrane space (IMS) are transferred via the dinuclear copper A center (CU(A)) of subunit 2 and heme A of subunit 1 to the active site in subunit 1, a binuclear center (BNC) formed by heme A3 and copper B (CU(B)). The BNC reduces molecular oxygen to 2 water molecules using 4 electrons from cytochrome c in the IMS and 4 protons from the mitochondrial matrix. In Lagothrix lagotricha (Brown woolly monkey), this protein is Cytochrome c oxidase subunit 2 (MT-CO2).